Here is a 506-residue protein sequence, read N- to C-terminus: Probable Xaa-Pro aminopeptidase PAAG_05466 (506 aa).

Mn(2+)-binding residues include aspartate 285, aspartate 296, glutamate 433, and glutamate 471.

Belongs to the peptidase M24B family. The cofactor is Mn(2+).

The enzyme catalyses Release of any N-terminal amino acid, including proline, that is linked to proline, even from a dipeptide or tripeptide.. Catalyzes the removal of a penultimate prolyl residue from the N-termini of peptides. In Paracoccidioides lutzii (strain ATCC MYA-826 / Pb01) (Paracoccidioides brasiliensis), this protein is Probable Xaa-Pro aminopeptidase PAAG_05466.